The sequence spans 826 residues: DNA mismatch repair protein MutS (826 aa).

622-629 (GPNMAGKS) contributes to the ATP binding site.

The protein belongs to the DNA mismatch repair MutS family.

In terms of biological role, this protein is involved in the repair of mismatches in DNA. It is possible that it carries out the mismatch recognition step. This protein has a weak ATPase activity. The polypeptide is DNA mismatch repair protein MutS (Chlamydia abortus (strain DSM 27085 / S26/3) (Chlamydophila abortus)).